A 316-amino-acid polypeptide reads, in one-letter code: tRNA methyltransferase 10 homolog B (316 aa).

2 disordered regions span residues 1–30 (MDCE…RDDG) and 42–98 (VEYD…DLGN). Residues 63-82 (VQRKQRHWERIVSSKKSKRK) show a composition bias toward basic residues. The stretch at 75-96 (SSKKSKRKQERERRKIKRAEDL) forms a coiled coil. The span at 83-95 (QERERRKIKRAED) shows a compositional bias: basic and acidic residues. Residues 113 to 310 (TKEKLLEAKH…KGVSPGKGYI (198 aa)) form the SAM-dependent MTase TRM10-type domain.

This sequence belongs to the class IV-like SAM-binding methyltransferase superfamily. TRM10 family.

The catalysed reaction is guanosine(9) in tRNA + S-adenosyl-L-methionine = N(1)-methylguanosine(9) in tRNA + S-adenosyl-L-homocysteine + H(+). S-adenosyl-L-methionine-dependent guanine N(1)-methyltransferase that catalyzes the formation of N(1)-methylguanine at position 9 (m1G9) in tRNAs. Probably not able to catalyze formation of N(1)-methyladenine at position 9 (m1A9) in tRNAs. The chain is tRNA methyltransferase 10 homolog B (Trmt10b) from Rattus norvegicus (Rat).